The following is a 523-amino-acid chain: uncharacterized protein (523 aa).

The transit peptide at 1 to 63 directs the protein to the chloroplast; that stretch reads MACVSTCLIL…NRHGIAVVKA (63 aa). A run of 3 helical transmembrane segments spans residues 180-200, 386-406, and 423-443; these read VSFGTALIASIVIVYTSIIAL, ALVIGLGAVNLFGVIVLNTLL, and IYPLLQIYAGSFFTIPLIRWF.

Its subcellular location is the plastid. It is found in the chloroplast membrane. This is an uncharacterized protein from Arabidopsis thaliana (Mouse-ear cress).